We begin with the raw amino-acid sequence, 150 residues long: Troponin C, isoform 2B (150 aa).

Position 1 is an N-acetylmethionine (methionine 1). EF-hand domains lie at 7–42, 43–78, 83–118, and 119–150; these read EQLSALQKAFDSFDTDSKGFITPETVGVILRMMGVK, ISEKNLQEVISETDEDGSGELEFEEFVELAAKFLIE, ALKAELREAFRVYDRGGNGYITTDVLKEILRELDNR, and LTEEDLDSIIEEVDEDGSGTLDFNEFMQMMNG. Ca(2+) contacts are provided by aspartate 56, aspartate 58, serine 60, glutamate 62, and glutamate 67. Aspartate 132, aspartate 134, serine 136, threonine 138, and glutamate 143 together coordinate Ca(2+).

The protein belongs to the troponin C family.

Functionally, troponin is the central regulatory protein of striated muscle contraction. Tn consists of three components: Tn-I which is the inhibitor of actomyosin ATPase, Tn-T which contains the binding site for tropomyosin and Tn-C. The binding of calcium to Tn-C abolishes the inhibitory action of Tn on actin filaments. The polypeptide is Troponin C, isoform 2B (Homarus americanus (American lobster)).